A 209-amino-acid polypeptide reads, in one-letter code: Large ribosomal subunit protein uL3 (209 aa).

Positions 132–153 are disordered; the sequence is ATHGNSLSHRVPGSIGQNQTPG. Position 150 is an N5-methylglutamine (Q150).

The protein belongs to the universal ribosomal protein uL3 family. As to quaternary structure, part of the 50S ribosomal subunit. Forms a cluster with proteins L14 and L19. In terms of processing, methylated by PrmB.

One of the primary rRNA binding proteins, it binds directly near the 3'-end of the 23S rRNA, where it nucleates assembly of the 50S subunit. This is Large ribosomal subunit protein uL3 from Erwinia tasmaniensis (strain DSM 17950 / CFBP 7177 / CIP 109463 / NCPPB 4357 / Et1/99).